The chain runs to 86 residues: Large ribosomal subunit protein bL35m (86 aa).

The N-terminal 18 residues, 1 to 18 (MLVVFQRVVRATVLVGRK), are a transit peptide targeting the mitochondrion. The segment at 45–69 (RKHAGAQHLNRDTSSSTRARQRQWE) is disordered.

It belongs to the bacterial ribosomal protein bL35 family. As to quaternary structure, component of the mitochondrial large ribosomal subunit (mt-LSU). Mature yeast 74S mitochondrial ribosomes consist of a small (37S) and a large (54S) subunit. The 37S small subunit contains a 15S ribosomal RNA (15S mt-rRNA) and at least 32 different proteins. The 54S large subunit contains a 21S rRNA (21S mt-rRNA) and at least 45 different proteins.

The protein localises to the mitochondrion. Functionally, component of the mitochondrial ribosome (mitoribosome), a dedicated translation machinery responsible for the synthesis of mitochondrial genome-encoded proteins, including at least some of the essential transmembrane subunits of the mitochondrial respiratory chain. The mitoribosomes are attached to the mitochondrial inner membrane and translation products are cotranslationally integrated into the membrane. The polypeptide is Large ribosomal subunit protein bL35m (new15) (Schizosaccharomyces pombe (strain 972 / ATCC 24843) (Fission yeast)).